A 199-amino-acid polypeptide reads, in one-letter code: Holliday junction branch migration complex subunit RuvA (199 aa).

The segment at 1–64 (MIALLTGKLA…EDAINLYGFR (64 aa)) is domain I. The domain II stretch occupies residues 65-143 (TQQEKELFQL…KLGLAQPQAG (79 aa)). Residues 144–148 (GATAP) are flexible linker. The tract at residues 149–199 (AKQEIRDDVLSALINLGYKEAVVQKALAELKVTEDATVELVLKQALKILMK) is domain III.

It belongs to the RuvA family. As to quaternary structure, homotetramer. Forms an RuvA(8)-RuvB(12)-Holliday junction (HJ) complex. HJ DNA is sandwiched between 2 RuvA tetramers; dsDNA enters through RuvA and exits via RuvB. An RuvB hexamer assembles on each DNA strand where it exits the tetramer. Each RuvB hexamer is contacted by two RuvA subunits (via domain III) on 2 adjacent RuvB subunits; this complex drives branch migration. In the full resolvosome a probable DNA-RuvA(4)-RuvB(12)-RuvC(2) complex forms which resolves the HJ.

It localises to the cytoplasm. In terms of biological role, the RuvA-RuvB-RuvC complex processes Holliday junction (HJ) DNA during genetic recombination and DNA repair, while the RuvA-RuvB complex plays an important role in the rescue of blocked DNA replication forks via replication fork reversal (RFR). RuvA specifically binds to HJ cruciform DNA, conferring on it an open structure. The RuvB hexamer acts as an ATP-dependent pump, pulling dsDNA into and through the RuvAB complex. HJ branch migration allows RuvC to scan DNA until it finds its consensus sequence, where it cleaves and resolves the cruciform DNA. The polypeptide is Holliday junction branch migration complex subunit RuvA (Geobacter sp. (strain M21)).